A 126-amino-acid polypeptide reads, in one-letter code: Aspartate 1-decarboxylase (126 aa).

Serine 25 serves as the catalytic Schiff-base intermediate with substrate; via pyruvic acid. Serine 25 is modified (pyruvic acid (Ser)). Threonine 57 contributes to the substrate binding site. Tyrosine 58 functions as the Proton donor in the catalytic mechanism. 73–75 (GAA) is a binding site for substrate.

Belongs to the PanD family. In terms of assembly, heterooctamer of four alpha and four beta subunits. Pyruvate is required as a cofactor. In terms of processing, is synthesized initially as an inactive proenzyme, which is activated by self-cleavage at a specific serine bond to produce a beta-subunit with a hydroxyl group at its C-terminus and an alpha-subunit with a pyruvoyl group at its N-terminus.

The protein localises to the cytoplasm. The enzyme catalyses L-aspartate + H(+) = beta-alanine + CO2. It functions in the pathway cofactor biosynthesis; (R)-pantothenate biosynthesis; beta-alanine from L-aspartate: step 1/1. Catalyzes the pyruvoyl-dependent decarboxylation of aspartate to produce beta-alanine. The chain is Aspartate 1-decarboxylase from Acetivibrio thermocellus (strain ATCC 27405 / DSM 1237 / JCM 9322 / NBRC 103400 / NCIMB 10682 / NRRL B-4536 / VPI 7372) (Clostridium thermocellum).